We begin with the raw amino-acid sequence, 249 residues long: GTP cyclohydrolase III (249 aa).

This sequence belongs to the archaeal-type GTP cyclohydrolase family.

It catalyses the reaction GTP + 3 H2O = 2-amino-5-formylamino-6-(5-phospho-D-ribosylamino)pyrimidin-4(3H)-one + 2 phosphate + 2 H(+). Its function is as follows. Catalyzes the formation of 2-amino-5-formylamino-6-ribofuranosylamino-4(3H)-pyrimidinone ribonucleotide monophosphate and inorganic phosphate from GTP. Also has an independent pyrophosphate phosphohydrolase activity. This chain is GTP cyclohydrolase III, found in Methanothermobacter thermautotrophicus (strain ATCC 29096 / DSM 1053 / JCM 10044 / NBRC 100330 / Delta H) (Methanobacterium thermoautotrophicum).